Reading from the N-terminus, the 214-residue chain is CASP-like protein UU5 (214 aa).

The disordered stretch occupies residues 1–20; that stretch reads MSTVAQDSAPGGGKIQDAME. At 1 to 57 the chain is on the cytoplasmic side; that stretch reads MSTVAQDSAPGGGKIQDAMEQGAPGASSAAVVPEGGHYTQTPSPAFQAVKKNINHMS. The helical transmembrane segment at 58-78 threads the bilayer; that stretch reads AFSLGLRVAEFVLSVIAFSLM. At 79–99 the chain is on the extracellular side; it reads ASADQNGAVYSTFTSYSFVLA. A helical transmembrane segment spans residues 100 to 120; that stretch reads VNVLVVFYTIGQIIMSVLLLV. The Cytoplasmic portion of the chain corresponds to 121 to 138; sequence SGSTPKKIYLFITFGCDQ. A helical membrane pass occupies residues 139–159; that stretch reads LSAFLLMAAGAAGASVALIIN. At 160-193 the chain is on the extracellular side; that stretch reads RGGVTDAYGNGCIDGKITSFCSHAQASVAFTFLS. The helical transmembrane segment at 194–214 threads the bilayer; the sequence is FFCMVISSLLGVYSLAPYLIL.

It belongs to the Casparian strip membrane proteins (CASP) family. In terms of assembly, homodimer and heterodimers.

Its subcellular location is the cell membrane. The protein is CASP-like protein UU5 of Physcomitrium patens (Spreading-leaved earth moss).